A 429-amino-acid chain; its full sequence is Adenylosuccinate synthetase (429 aa).

Residues 13–19 (GDEGKGK) and 41–43 (GHT) contribute to the GTP site. Asp-14 acts as the Proton acceptor in catalysis. Residues Asp-14 and Gly-41 each contribute to the Mg(2+) site. IMP-binding positions include 14-17 (DEGK), 39-42 (NAGH), Thr-130, Arg-144, Gln-224, Thr-239, and Arg-303. Catalysis depends on His-42, which acts as the Proton donor. 299–305 (ATTGRAR) is a substrate binding site. GTP contacts are provided by residues Arg-305, 331-333 (KLD), and 412-414 (STG).

Belongs to the adenylosuccinate synthetase family. As to quaternary structure, homodimer. Mg(2+) serves as cofactor.

It localises to the cytoplasm. The enzyme catalyses IMP + L-aspartate + GTP = N(6)-(1,2-dicarboxyethyl)-AMP + GDP + phosphate + 2 H(+). The protein operates within purine metabolism; AMP biosynthesis via de novo pathway; AMP from IMP: step 1/2. Plays an important role in the de novo pathway of purine nucleotide biosynthesis. Catalyzes the first committed step in the biosynthesis of AMP from IMP. This is Adenylosuccinate synthetase from Psychrobacter cryohalolentis (strain ATCC BAA-1226 / DSM 17306 / VKM B-2378 / K5).